The primary structure comprises 208 residues: Outer-membrane lipoprotein LolB (208 aa).

The first 21 residues, 1-21 (MLSSKRRLMRLLPLASLLLTA), serve as a signal peptide directing secretion. Cys22 is lipidated: N-palmitoyl cysteine. Residue Cys22 is the site of S-diacylglycerol cysteine attachment.

This sequence belongs to the LolB family. Monomer.

The protein resides in the cell outer membrane. Functionally, plays a critical role in the incorporation of lipoproteins in the outer membrane after they are released by the LolA protein. In Erwinia tasmaniensis (strain DSM 17950 / CFBP 7177 / CIP 109463 / NCPPB 4357 / Et1/99), this protein is Outer-membrane lipoprotein LolB.